The primary structure comprises 188 residues: Pyridoxal 5'-phosphate synthase subunit PdxT (188 aa).

G47–S49 serves as a coordination point for L-glutamine. Catalysis depends on C79, which acts as the Nucleophile. L-glutamine-binding positions include R106 and I134–R135. Residues H169 and E171 each act as charge relay system in the active site.

It belongs to the glutaminase PdxT/SNO family. As to quaternary structure, in the presence of PdxS, forms a dodecamer of heterodimers. Only shows activity in the heterodimer.

It catalyses the reaction aldehydo-D-ribose 5-phosphate + D-glyceraldehyde 3-phosphate + L-glutamine = pyridoxal 5'-phosphate + L-glutamate + phosphate + 3 H2O + H(+). The enzyme catalyses L-glutamine + H2O = L-glutamate + NH4(+). It participates in cofactor biosynthesis; pyridoxal 5'-phosphate biosynthesis. Catalyzes the hydrolysis of glutamine to glutamate and ammonia as part of the biosynthesis of pyridoxal 5'-phosphate. The resulting ammonia molecule is channeled to the active site of PdxS. The protein is Pyridoxal 5'-phosphate synthase subunit PdxT of Caldicellulosiruptor saccharolyticus (strain ATCC 43494 / DSM 8903 / Tp8T 6331).